The sequence spans 916 residues: Protein translocase subunit SecA (916 aa).

ATP contacts are provided by residues Gln-86, 104–108 (GEGKT), and Asp-494. Residues 859 to 916 (LEAPEKPAQLQYTAPSEGGGTQTRVETRSTGRSGNPAKAAEQDAAKDAAKRPAKKKRR) form a disordered region. The span at 880–891 (QTRVETRSTGRS) shows a compositional bias: polar residues. Over residues 898–908 (AEQDAAKDAAK) the composition is skewed to basic and acidic residues.

This sequence belongs to the SecA family. Monomer and homodimer. Part of the essential Sec protein translocation apparatus which comprises SecA, SecYEG and auxiliary proteins SecDF. Other proteins may also be involved.

Its subcellular location is the cell membrane. It localises to the cytoplasm. The enzyme catalyses ATP + H2O + cellular proteinSide 1 = ADP + phosphate + cellular proteinSide 2.. In terms of biological role, part of the Sec protein translocase complex. Interacts with the SecYEG preprotein conducting channel. Has a central role in coupling the hydrolysis of ATP to the transfer of proteins into and across the cell membrane, serving as an ATP-driven molecular motor driving the stepwise translocation of polypeptide chains across the membrane. This is Protein translocase subunit SecA from Pseudarthrobacter chlorophenolicus (strain ATCC 700700 / DSM 12829 / CIP 107037 / JCM 12360 / KCTC 9906 / NCIMB 13794 / A6) (Arthrobacter chlorophenolicus).